We begin with the raw amino-acid sequence, 480 residues long: Islet cell autoantigen 1 (480 aa).

The AH domain maps to 50-253 (ASDADLDAKL…TSHTMAAIHE (204 aa)). Composition is skewed to basic and acidic residues over residues 276 to 293 (LVEK…REAV) and 306 to 321 (ENQH…EEGK). 2 disordered regions span residues 276–338 (LVEK…ACSG) and 400–421 (LKEP…IGSA).

It is found in the cytoplasm. It localises to the cytosol. Its subcellular location is the golgi apparatus membrane. The protein localises to the cytoplasmic vesicle. The protein resides in the secretory vesicle membrane. It is found in the secretory vesicle. It localises to the synaptic vesicle membrane. In terms of biological role, may play a role in neurotransmitter secretion. This is Islet cell autoantigen 1 from Rattus norvegicus (Rat).